Consider the following 538-residue polypeptide: Mitochondria-eating protein (538 aa).

The interval 1-273 (MAENLKRLVS…PRSRSCSRSR (273 aa)) is interaction with YWHAG/14-3-3 protein gamma. S85 is subject to Phosphoserine. Positions 92-137 (GKPVDSKVPSLQNTFDRERRKDPSPRDRDMQQLDSNLNSTRSQLNQ) are disordered. A compositionally biased stretch (basic and acidic residues) spans 106–122 (FDRERRKDPSPRDRDMQ). Coiled-coil stretches lie at residues 118–186 (DRDM…ARHR) and 220–256 (QRDT…RSSR). The segment covering 123–137 (QLDSNLNSTRSQLNQ) has biased composition (polar residues). Phosphoserine is present on residues S156 and S159. 2 disordered regions span residues 174–227 (LKTL…EVTS) and 247–292 (KSAL…NRSK). Basic and acidic residues-rich tracts occupy residues 181 to 209 (EDAR…RRCE) and 216 to 227 (RNADQRDTEVTS). Positions 253–278 (RSSRSRSPSPAPRSRSCSRSRSASPS) are enriched in low complexity. A phosphoserine mark is found at S285, S287, and S509.

The protein belongs to the MIEAP family. In terms of assembly, interacts (via coiled-coil domains) with BNIP3L (via BH3 domain). Interacts (via coiled-coil domains) with BNIP3 (via BH3 domain). Interacts with YWHAG/14-3-3 protein gamma; a protein that also plays a role in MALM.

Its subcellular location is the cytoplasm. It is found in the cytosol. The protein resides in the mitochondrion outer membrane. The protein localises to the mitochondrion matrix. Its function is as follows. Key regulator of mitochondrial quality that mediates the repairing or degradation of unhealthy mitochondria in response to mitochondrial damage. Mediator of mitochondrial protein catabolic process (also named MALM) by mediating the degradation of damaged proteins inside mitochondria by promoting the accumulation in the mitochondrial matrix of hydrolases that are characteristic of the lysosomal lumen. Also involved in mitochondrion degradation of damaged mitochondria by promoting the formation of vacuole-like structures (named MIV), which engulf and degrade unhealthy mitochondria by accumulating lysosomes. The physical interaction of SPATA18/MIEAP, BNIP3 and BNIP3L/NIX at the mitochondrial outer membrane regulates the opening of a pore in the mitochondrial double membrane in order to mediate the translocation of lysosomal proteins from the cytoplasm to the mitochondrial matrix. Binds cardiolipin. May form molecular condensates (non-membrane-bounded organelles) within mitochondria that compartmentalize and promote cardiolipin metabolism. The protein is Mitochondria-eating protein (SPATA18) of Macaca fascicularis (Crab-eating macaque).